The following is a 41-amino-acid chain: trp operon leader peptide (41 aa).

Functionally, this protein is involved in control of the biosynthesis of tryptophan. The chain is trp operon leader peptide (trpL) from Vibrio parahaemolyticus serotype O3:K6 (strain RIMD 2210633).